The primary structure comprises 233 residues: Uridylate kinase (233 aa).

Residues 8–11, G51, and R55 each bind ATP; that span reads KLSG. Residues D68 and 129–136 each bind UMP; that span reads TSNPFFTT. ATP-binding residues include T156, Y162, and D165.

The protein belongs to the UMP kinase family. As to quaternary structure, homohexamer.

It is found in the cytoplasm. It carries out the reaction UMP + ATP = UDP + ADP. Its pathway is pyrimidine metabolism; CTP biosynthesis via de novo pathway; UDP from UMP (UMPK route): step 1/1. Its activity is regulated as follows. Inhibited by UTP. In terms of biological role, catalyzes the reversible phosphorylation of UMP to UDP. The polypeptide is Uridylate kinase (Thermosipho melanesiensis (strain DSM 12029 / CIP 104789 / BI429)).